Consider the following 330-residue polypeptide: Serine/threonine-protein phosphatase PP1-alpha catalytic subunit (330 aa).

At S2 the chain carries N-acetylserine. 2 positions are modified to phosphoserine: S2 and S22. Residues D64, H66, D92, and N124 each contribute to the Mn(2+) site. H125 (proton donor) is an active-site residue. Mn(2+)-binding residues include H173 and H248. N6-acetyllysine is present on K305. Y306 is subject to Phosphotyrosine. The tract at residues 306 to 330 (YGQFSGLNPGGRPITPPRNSAKAKK) is disordered. The residue at position 320 (T320) is a Phosphothreonine. Residue S325 is modified to Phosphoserine.

This sequence belongs to the PPP phosphatase family. PP-1 subfamily. In terms of assembly, PP1 comprises a catalytic subunit, PPP1CA, PPP1CB or PPP1CC, which is folded into its native form by inhibitor 2 and glycogen synthetase kinase 3, and then complexed to one or several targeting or regulatory subunits. PPP1R12A, PPP1R12B and PPP1R12C mediate binding to myosin. PPP1R3A (in skeletal muscle), PPP1R3B (in liver), PPP1R3C, PPP1R3D and PPP1R3F (in brain) mediate binding to glycogen. Interacts with PPP1R39. Interacts with BTBD10. Interacts with KCTD20. Interacts with PPP1R9A and PPP1R9B. Part of a complex containing PPP1R15B, PP1 and NCK1/2. Interacts with PHACTR4; which acts as an activator of PP1 activity. Interacts with PPP1R15A and PPP1R15B; the interactions mediate binding to EIF2S1. Interacts with PPP1R7. Interacts with YLPM1. Forms a complex with ILF2, ILF3, YLPM1, KHDRBS1, RBMX and NCOA5. Interacts with NOM1 and PPP1R8. Interacts with PPP1R16B. Interacts with RPSA only in the presence of PPP1R16B. Component of the PNUTS-PP1 phosphatase complex, composed of PPP1R10/PNUTS, TOX4, WDR82, and PPP1CA or PPP1CB or PPP1CC. Interacts with PPP1R10/PNUTS and PPP1R8. Interacts with WDR82 in the presence of PPP1R10/PNUTS. Interacts with TRIM28; the interaction dephosphorylates TRIM28 on 'Ser-824' and forms a complex at the p21 promoter site. Interacts with isoform 1 and isoform 4 of NEK2. Interacts with FER; this promotes phosphorylation at Thr-320. Interacts with DAB2; the interaction is mutually exclusive with the AXIN1:PPP1CA interaction. Interacts with FOXP3. Interacts with CENPA. Interacts with ATG16L1. Found in a complex with PPP1CA, PPP1CC, SHC1 and PEAK1. Interacts with tensin TNS1. Interacts with SAXO4, PPP1R21, PPP1R26, PPP1R27, PPP1R35, PPP1R36, PPP1R37, SH3RF2, ELFN1 and ELFN2. Interacts with TPRN; the interaction results in inhibition of PPC1A phosphatase activity. Interacts with SKA1 (via C-terminus); the interaction is direct and required for the recruitment of PP1 to the kinetochore. Interacts with the KNL1 complex subunit KNL1; the interaction is direct and mutually exclusive with KNL1 binding to microtubules. Component of the SHOC2-MRAS-PP1c (SMP) complex consisting of SHOC2, GTP-bound M-Ras/MRAS and the catalytic subunit of protein phosphatase 1 (either PPP1CA, PPP1CB or PPP1CC). SHOC2 and PP1c preferably bind M-Ras/MRAS, but they also bind K-Ras/KRAS, N-Ras/NRAS and H-Ras/HRAS; these interactions are GTP-dependent and both SHOC2 and PP1c are required to form a stable complex. Interacts with SHOC2 in the absence of Ras GTPases. (Microbial infection) Interacts with HHV-1 ICP34.5. As to quaternary structure, (Microbial infection) Interacts with Venezuelan equine encephalitis virus (VEEV) capsid protein; this interaction dephosphorylates the capsid protein, which increases its ability to bind to the viral genome. The cofactor is Fe cation. Requires Mn(2+) as cofactor. Phosphorylated. Dephosphorylated at Thr-320 in the presence of ionizing radiation.

It localises to the cytoplasm. Its subcellular location is the nucleus. The protein localises to the nucleoplasm. The protein resides in the nucleolus. The catalysed reaction is O-phospho-L-seryl-[protein] + H2O = L-seryl-[protein] + phosphate. It carries out the reaction O-phospho-L-threonyl-[protein] + H2O = L-threonyl-[protein] + phosphate. The phosphatase activity of the PPP1R15A-PP1 complex toward EIF2S1 is specifically inhibited by Salubrinal, a drug that protects cells from endoplasmic reticulum stress. Functionally, protein phosphatase that associates with over 200 regulatory proteins to form highly specific holoenzymes which dephosphorylate hundreds of biological targets. Protein phosphatase 1 (PP1) is essential for cell division, transcription elongation, and participates in the regulation of glycogen metabolism, muscle contractility and protein synthesis. Involved in regulation of ionic conductances and long-term synaptic plasticity. May play an important role in dephosphorylating substrates such as the postsynaptic density-associated Ca(2+)/calmodulin dependent protein kinase II. Catalytic component of the PNUTS-PP1 protein phosphatase complex, a protein phosphatase 1 (PP1) complex that promotes RNA polymerase II transcription pause-release, allowing transcription elongation: the PNUTS-PP1 complex mediates the release of RNA polymerase II from promoter-proximal region of genes by catalyzing dephosphorylation of proteins involved in transcription, such as AFF4, CDK9, MEPCE, INTS12, NCBP1, POLR2M/GDOWN1 and SUPT6H. The PNUTS-PP1 complex also regulates transcription termination by mediating dephosphorylation of SUPT5H in termination zones downstream of poly(A) sites, thereby promoting deceleration of RNA polymerase II transcription. PNUTS-PP1 complex is also involved in the response to replication stress by mediating dephosphorylation of POLR2A at 'Ser-5' of the CTD, promoting RNA polymerase II degradation. PNUTS-PP1 also plays a role in the control of chromatin structure and cell cycle progression during the transition from mitosis into interphase. Regulates NEK2 function in terms of kinase activity and centrosome number and splitting, both in the presence and absence of radiation-induced DNA damage. Regulator of neural tube and optic fissure closure, and enteric neural crest cell (ENCCs) migration during development. In balance with CSNK1D and CSNK1E, determines the circadian period length, through the regulation of the speed and rhythmicity of PER1 and PER2 phosphorylation. May dephosphorylate CSNK1D and CSNK1E. Dephosphorylates the 'Ser-418' residue of FOXP3 in regulatory T-cells (Treg) from patients with rheumatoid arthritis, thereby inactivating FOXP3 and rendering Treg cells functionally defective. Dephosphorylates CENPA. Dephosphorylates the 'Ser-139' residue of ATG16L1 causing dissociation of ATG12-ATG5-ATG16L1 complex, thereby inhibiting autophagy. Together with PPP1CC (PP1-gamma subunit), dephosphorylates IFIH1/MDA5 and RIG-I leading to their activation and a functional innate immune response. Core component of the SHOC2-MRAS-PP1c (SMP) holophosphatase complex that regulates the MAPK pathway activation. The SMP complex specifically dephosphorylates the inhibitory phosphorylation at 'Ser-259' of RAF1 kinase, 'Ser-365' of BRAF kinase and 'Ser-214' of ARAF kinase, stimulating their kinase activities. The SMP complex enhances the dephosphorylation activity and substrate specificity of PP1c. Its function is as follows. (Microbial infection) Necessary for alphaviruses replication. The polypeptide is Serine/threonine-protein phosphatase PP1-alpha catalytic subunit (PPP1CA) (Homo sapiens (Human)).